Here is a 528-residue protein sequence, read N- to C-terminus: Serine/threonine-protein kinase akt-2 (528 aa).

The 104-residue stretch at 12–115 (DIVIESWLHK…WIEAIQAVSS (104 aa)) folds into the PH domain. The interval 121 to 153 (ENAGNTSMQEEDTNGNPSGESDVNMDATSTRSD) is disordered. The span at 123-153 (AGNTSMQEEDTNGNPSGESDVNMDATSTRSD) shows a compositional bias: polar residues. One can recognise a Protein kinase domain in the interval 180–437 (FDFLKVLGQG…AREVSRAEFF (258 aa)). ATP is bound by residues 186–194 (LGQGTFGKV) and lysine 209. The active-site Proton acceptor is aspartate 303. In terms of domain architecture, AGC-kinase C-terminal spans 438–515 (KDVDWEATLR…YYVSGSLERS (78 aa)).

The protein belongs to the protein kinase superfamily. AGC Ser/Thr protein kinase family. RAC subfamily. Interacts with pdk-1, sgk-1, akt-1 and daf-16. Part of a complex containing sgk-1, akt-1 and akt-2. It depends on Mg(2+) as a cofactor. Expressed in neurons, muscle cells of the pharynx, rectal gland cells, and spermatheca.

The catalysed reaction is L-seryl-[protein] + ATP = O-phospho-L-seryl-[protein] + ADP + H(+). It catalyses the reaction L-threonyl-[protein] + ATP = O-phospho-L-threonyl-[protein] + ADP + H(+). Phosphorylated and activated by pdk-1. In terms of biological role, acts downstream of PI3 kinase age-1 and kinase pdk-1 in the daf-2/insulin receptor-like transduction pathway. Essential role in regulating developmental arrest at the dauer stage. Phosphorylates Forkhead-related daf-16 and the longevity-promoting skn-1 transcription factors, which inhibits their entry into the nucleus and antagonizes their functions. Role in immune function and pathogen resistance. Downstream of age-1 and together with akt-1 and sgk-1, promotes cell survival during embryonic development. Plays a role in maintaining the gonadal basement membrane through antagonizing akt-1 activity. This Caenorhabditis elegans protein is Serine/threonine-protein kinase akt-2.